A 251-amino-acid chain; its full sequence is uncharacterized protein (251 aa).

An N-terminal signal peptide occupies residues 1–18 (MRILIILSIILCSFFARA).

It belongs to the MlaA family.

This is an uncharacterized protein from Rickettsia typhi (strain ATCC VR-144 / Wilmington).